The primary structure comprises 470 residues: Proton-coupled amino acid transporter 3 (470 aa).

Topologically, residues M1–Q46 are cytoplasmic. Over residues S10–Q20 the composition is skewed to polar residues. Residues S10–N33 are disordered. Residues S21–S31 show a composition bias toward low complexity. A helical transmembrane segment spans residues T47 to I67. Residues K68 to G71 are Extracellular-facing. Residues L72–I92 traverse the membrane as a helical segment. Over L93–T137 the chain is Cytoplasmic. The chain crosses the membrane as a helical span at residues V138–A158. The Extracellular segment spans residues D159–P185. The helical transmembrane segment at I186–I206 threads the bilayer. The Cytoplasmic segment spans residues Q207–K210. Residues V211–F231 traverse the membrane as a helical segment. The Extracellular portion of the chain corresponds to E232–T252. A helical transmembrane segment spans residues F253 to L273. Residues K274–S284 lie on the Cytoplasmic side of the membrane. The chain crosses the membrane as a helical span at residues F285–G305. At Y306 to G337 the chain is on the extracellular side. Residues I338–I358 traverse the membrane as a helical segment. Residues S359–L367 lie on the Cytoplasmic side of the membrane. The helical transmembrane segment at F368 to I388 threads the bilayer. The Extracellular segment spans residues P389–D392. Residues L393 to L413 form a helical membrane-spanning segment. The Cytoplasmic portion of the chain corresponds to L414–S425. The chain crosses the membrane as a helical span at residues C426 to G446. The Extracellular portion of the chain corresponds to T447–A470.

This sequence belongs to the amino acid/polyamine transporter 2 family. As to expression, specifically expressed in testis.

It localises to the membrane. The protein is Proton-coupled amino acid transporter 3 (SLC36A3) of Homo sapiens (Human).